The sequence spans 266 residues: GTP cyclohydrolase FolE2 (266 aa).

This sequence belongs to the GTP cyclohydrolase IV family.

It catalyses the reaction GTP + H2O = 7,8-dihydroneopterin 3'-triphosphate + formate + H(+). The protein operates within cofactor biosynthesis; 7,8-dihydroneopterin triphosphate biosynthesis; 7,8-dihydroneopterin triphosphate from GTP: step 1/1. In terms of biological role, converts GTP to 7,8-dihydroneopterin triphosphate. This Burkholderia mallei (strain ATCC 23344) protein is GTP cyclohydrolase FolE2.